The following is a 307-amino-acid chain: Aspartate carbamoyltransferase catalytic subunit (307 aa).

The carbamoyl phosphate site is built by R59 and T60. K87 lines the L-aspartate pocket. Carbamoyl phosphate is bound by residues R109, H137, and Q140. Residues R173 and R223 each contribute to the L-aspartate site. 2 residues coordinate carbamoyl phosphate: G266 and P267.

It belongs to the aspartate/ornithine carbamoyltransferase superfamily. ATCase family. In terms of assembly, heterododecamer (2C3:3R2) of six catalytic PyrB chains organized as two trimers (C3), and six regulatory PyrI chains organized as three dimers (R2).

It carries out the reaction carbamoyl phosphate + L-aspartate = N-carbamoyl-L-aspartate + phosphate + H(+). The protein operates within pyrimidine metabolism; UMP biosynthesis via de novo pathway; (S)-dihydroorotate from bicarbonate: step 2/3. Functionally, catalyzes the condensation of carbamoyl phosphate and aspartate to form carbamoyl aspartate and inorganic phosphate, the committed step in the de novo pyrimidine nucleotide biosynthesis pathway. The polypeptide is Aspartate carbamoyltransferase catalytic subunit (Helicobacter pylori (strain Shi470)).